The chain runs to 605 residues: Dihydrogeodin oxidase (605 aa).

Residues 1-18 form the signal peptide; sequence MPSLKDWVVAGLVPMTIA. 3 N-linked (GlcNAc...) asparagine glycosylation sites follow: asparagine 27, asparagine 107, and asparagine 112. Plastocyanin-like domains follow at residues 65–183, 189–347, and 424–567; these read TVTQ…GPSS, DLGP…YDES, and YVDW…KIKP. Residues histidine 117, histidine 119, histidine 161, and histidine 163 each contribute to the Cu cation site. N-linked (GlcNAc...) asparagine glycans are attached at residues asparagine 278 and asparagine 467. Cu cation is bound by residues histidine 484, histidine 487, histidine 489, histidine 543, cysteine 544, histidine 545, and histidine 549.

This sequence belongs to the multicopper oxidase family. The cofactor is Cu cation.

It catalyses the reaction 2 dihydrogeodin + O2 + 2 H(+) = 2 (+)-geodin + 2 H2O. The protein operates within secondary metabolite biosynthesis. Functionally, dihydrogeodin oxidase; part of the gene cluster that mediates the biosynthesis of geodin, an intermediate in the biosynthesis of other natural products. The pathway begins with the synthesis of atrochrysone thioester by the polyketide synthase (PKS) gedC. The atrochrysone carboxyl ACP thioesterase gedB then breaks the thioester bond and releases the atrochrysone carboxylic acid from gedC. The atrochrysone carboxylic acid is then converted to atrochrysone which is further transformed into emodinanthrone. The next step is performed by the emodinanthrone oxygenase gedH that catalyzes the oxidation of emodinanthrone to emodin. Emodin O-methyltransferase encoded probably by gedA then catalyzes methylation of the 8-hydroxy group of emodin to form questin. Ring cleavage of questin by questin oxidase gedK leads to desmethylsulochrin via several intermediates including questin epoxide. Another methylation step probably catalyzed by methyltransferase gedG leads to the formation of sulochrin which is further converted to dihydrogeodin by the sulochrin halogenase gedL. Finally, the dihydrogeodin oxidase gedJ catalyzes the stereospecific phenol oxidative coupling reaction converting dihydrogeodin to geodin. This chain is Dihydrogeodin oxidase, found in Aspergillus terreus (strain NIH 2624 / FGSC A1156).